Consider the following 381-residue polypeptide: Lipid-A-disaccharide synthase (381 aa).

Belongs to the LpxB family.

It catalyses the reaction 2-N,3-O-bis[(3R)-3-hydroxytetradecanoyl]-alpha-D-glucosaminyl 1-phosphate + UDP-2-N,3-O-bis[(3R)-3-hydroxytetradecanoyl]-alpha-D-glucosamine = lipid A disaccharide (E. coli) + UDP + H(+). The catalysed reaction is a lipid X + a UDP-2-N,3-O-bis[(3R)-3-hydroxyacyl]-alpha-D-glucosamine = a lipid A disaccharide + UDP + H(+). Its pathway is glycolipid biosynthesis; lipid IV(A) biosynthesis; lipid IV(A) from (3R)-3-hydroxytetradecanoyl-[acyl-carrier-protein] and UDP-N-acetyl-alpha-D-glucosamine: step 5/6. Condensation of UDP-2,3-diacylglucosamine and 2,3-diacylglucosamine-1-phosphate to form lipid A disaccharide, a precursor of lipid A, a phosphorylated glycolipid that anchors the lipopolysaccharide to the outer membrane of the cell. This chain is Lipid-A-disaccharide synthase, found in Erwinia tasmaniensis (strain DSM 17950 / CFBP 7177 / CIP 109463 / NCPPB 4357 / Et1/99).